The primary structure comprises 525 residues: Phosphoenolpyruvate carboxykinase (ATP) 1 (525 aa).

Substrate-binding residues include Arg-55, Tyr-190, and Lys-196. ATP is bound by residues Lys-196, His-215, and 231–239; that span reads GLSGTGKTT. Residues Lys-196 and His-215 each coordinate Mn(2+). Asp-252 is a binding site for Mn(2+). ATP-binding residues include Glu-280, Arg-317, and Thr-442. Arg-317 contacts substrate.

The protein belongs to the phosphoenolpyruvate carboxykinase (ATP) family. Requires Mn(2+) as cofactor.

It localises to the cytoplasm. The catalysed reaction is oxaloacetate + ATP = phosphoenolpyruvate + ADP + CO2. The protein operates within carbohydrate biosynthesis; gluconeogenesis. Involved in the gluconeogenesis. Catalyzes the conversion of oxaloacetate (OAA) to phosphoenolpyruvate (PEP) through direct phosphoryl transfer between the nucleoside triphosphate and OAA. The sequence is that of Phosphoenolpyruvate carboxykinase (ATP) 1 from Moorella thermoacetica (strain ATCC 39073 / JCM 9320).